Reading from the N-terminus, the 138-residue chain is Large ribosomal subunit protein bL17 (138 aa).

This sequence belongs to the bacterial ribosomal protein bL17 family. Part of the 50S ribosomal subunit. Contacts protein L32.

In Halorhodospira halophila (strain DSM 244 / SL1) (Ectothiorhodospira halophila (strain DSM 244 / SL1)), this protein is Large ribosomal subunit protein bL17.